A 305-amino-acid polypeptide reads, in one-letter code: GTPase Era (305 aa).

One can recognise an Era-type G domain in the interval 9–176 (KSGFISIIGR…LDTLPKYLPE (168 aa)). Positions 17–24 (GRPNVGKS) are G1. Residue 17–24 (GRPNVGKS) participates in GTP binding. The segment at 43 to 47 (QTTRN) is G2. The tract at residues 64 to 67 (DTPG) is G3. GTP is bound by residues 64-68 (DTPGI) and 126-129 (NKID). The interval 126-129 (NKID) is G4. Residues 155-157 (ISA) form a G5 region. A KH type-2 domain is found at 207–286 (TREEIPHSIA…YLELWVKVQK (80 aa)).

The protein belongs to the TRAFAC class TrmE-Era-EngA-EngB-Septin-like GTPase superfamily. Era GTPase family. As to quaternary structure, monomer.

The protein resides in the cytoplasm. It localises to the cell membrane. In terms of biological role, an essential GTPase that binds both GDP and GTP, with rapid nucleotide exchange. Plays a role in 16S rRNA processing and 30S ribosomal subunit biogenesis and possibly also in cell cycle regulation and energy metabolism. The chain is GTPase Era from Lysinibacillus sphaericus (strain C3-41).